Here is a 469-residue protein sequence, read N- to C-terminus: NADH-quinone oxidoreductase subunit N (469 aa).

14 helical membrane passes run 2-22 (IALL…FLCV), 28-48 (RYSI…FFIV), 70-90 (FSFC…ISSF), 101-121 (EMFA…LSVE), 122-142 (LILT…MIAM), 157-177 (FLLS…VFGV), 194-214 (FLSI…IAIF), 233-253 (GFLA…LCFL), 261-281 (ILQG…NLLS), 290-310 (ILIA…SSVG), 315-335 (IYPA…LFAI), 361-381 (AFAF…VGFL), 398-418 (LAIF…KIII), and 447-467 (ILFI…LNLF).

It belongs to the complex I subunit 2 family. NDH-1 is composed of 14 different subunits. Subunits NuoA, H, J, K, L, M, N constitute the membrane sector of the complex.

It localises to the cell inner membrane. The enzyme catalyses a quinone + NADH + 5 H(+)(in) = a quinol + NAD(+) + 4 H(+)(out). In terms of biological role, NDH-1 shuttles electrons from NADH, via FMN and iron-sulfur (Fe-S) centers, to quinones in the respiratory chain. The immediate electron acceptor for the enzyme in this species is believed to be ubiquinone. Couples the redox reaction to proton translocation (for every two electrons transferred, four hydrogen ions are translocated across the cytoplasmic membrane), and thus conserves the redox energy in a proton gradient. The protein is NADH-quinone oxidoreductase subunit N of Campylobacter fetus subsp. fetus (strain 82-40).